The primary structure comprises 237 residues: Ribosomal RNA small subunit methyltransferase G (237 aa).

Residues glycine 78, phenylalanine 83, alanine 129–glutamate 130, and arginine 148 contribute to the S-adenosyl-L-methionine site.

This sequence belongs to the methyltransferase superfamily. RNA methyltransferase RsmG family.

The protein resides in the cytoplasm. In terms of biological role, specifically methylates the N7 position of a guanine in 16S rRNA. The protein is Ribosomal RNA small subunit methyltransferase G of Streptococcus pyogenes serotype M2 (strain MGAS10270).